A 189-amino-acid polypeptide reads, in one-letter code: dCTP deaminase (189 aa).

Residues 112-117 (KSTYAR), 136-138 (TLE), Gln157, Tyr171, and Gln181 contribute to the dCTP site. Glu138 serves as the catalytic Proton donor/acceptor.

It belongs to the dCTP deaminase family. As to quaternary structure, homotrimer.

It carries out the reaction dCTP + H2O + H(+) = dUTP + NH4(+). It functions in the pathway pyrimidine metabolism; dUMP biosynthesis; dUMP from dCTP (dUTP route): step 1/2. Its function is as follows. Catalyzes the deamination of dCTP to dUTP. This is dCTP deaminase from Xanthomonas campestris pv. campestris (strain 8004).